The following is a 116-amino-acid chain: Ribonuclease P protein component (116 aa).

This sequence belongs to the RnpA family. Consists of a catalytic RNA component (M1 or rnpB) and a protein subunit.

The enzyme catalyses Endonucleolytic cleavage of RNA, removing 5'-extranucleotides from tRNA precursor.. Its function is as follows. RNaseP catalyzes the removal of the 5'-leader sequence from pre-tRNA to produce the mature 5'-terminus. It can also cleave other RNA substrates such as 4.5S RNA. The protein component plays an auxiliary but essential role in vivo by binding to the 5'-leader sequence and broadening the substrate specificity of the ribozyme. The chain is Ribonuclease P protein component from Exiguobacterium sibiricum (strain DSM 17290 / CCUG 55495 / CIP 109462 / JCM 13490 / 255-15).